Consider the following 229-residue polypeptide: Large ribosomal subunit protein uL1 (229 aa).

Belongs to the universal ribosomal protein uL1 family. Part of the 50S ribosomal subunit.

Its function is as follows. Binds directly to 23S rRNA. The L1 stalk is quite mobile in the ribosome, and is involved in E site tRNA release. Functionally, protein L1 is also a translational repressor protein, it controls the translation of the L11 operon by binding to its mRNA. In Chlorobium luteolum (strain DSM 273 / BCRC 81028 / 2530) (Pelodictyon luteolum), this protein is Large ribosomal subunit protein uL1.